Here is an 851-residue protein sequence, read N- to C-terminus: DNA mismatch repair protein MutS (851 aa).

G602 to S609 provides a ligand contact to ATP.

Belongs to the DNA mismatch repair MutS family.

Functionally, this protein is involved in the repair of mismatches in DNA. It is possible that it carries out the mismatch recognition step. This protein has a weak ATPase activity. The protein is DNA mismatch repair protein MutS of Streptococcus pyogenes serotype M18 (strain MGAS8232).